A 451-amino-acid chain; its full sequence is F-box/LRR-repeat protein 13 (451 aa).

In terms of domain architecture, F-box spans 17 to 70 (VDWISKLPDCLLCEVLLNLPTKDVVKTSVLSRRWRNLWKHVPGLDLDNTDFQEF). LRR repeat units follow at residues 128 to 155 (DDSY…KLCG), 177 to 202 (TKFA…TIER), 224 to 251 (VADS…RLSD), and 335 to 363 (CVEF…VVKS). Residues 370 to 421 (GENIILPGPRRFLSSLEYVKIERPLKGEAMEMKLVSYLLENSTILKKLTLCL) form the FBD domain.

The protein is F-box/LRR-repeat protein 13 (FBL13) of Arabidopsis thaliana (Mouse-ear cress).